The sequence spans 429 residues: Enolase (429 aa).

A (2R)-2-phosphoglycerate-binding site is contributed by Q169. The active-site Proton donor is the E211. Positions 248, 289, and 316 each coordinate Mg(2+). K341, R370, S371, and K392 together coordinate (2R)-2-phosphoglycerate. Catalysis depends on K341, which acts as the Proton acceptor.

The protein belongs to the enolase family. Mg(2+) is required as a cofactor.

The protein localises to the cytoplasm. Its subcellular location is the secreted. It localises to the cell surface. It carries out the reaction (2R)-2-phosphoglycerate = phosphoenolpyruvate + H2O. The protein operates within carbohydrate degradation; glycolysis; pyruvate from D-glyceraldehyde 3-phosphate: step 4/5. Its function is as follows. Catalyzes the reversible conversion of 2-phosphoglycerate (2-PG) into phosphoenolpyruvate (PEP). It is essential for the degradation of carbohydrates via glycolysis. This Anaplasma phagocytophilum (strain HZ) protein is Enolase.